We begin with the raw amino-acid sequence, 881 residues long: Sodium/potassium/calcium exchanger Nckx30C (881 aa).

Residues 1–194 (MLQPTTCSKQ…SRCRSRRCLR (194 aa)) are Extracellular-facing. The N-linked (GlcNAc...) asparagine glycan is linked to Asn69. 4 disordered regions span residues 79-111 (DMLS…APSD), 149-181 (AKTR…LLHP), 215-255 (AAKP…TSGE), and 272-315 (GLEE…TTKT). The segment covering 85 to 95 (RSRSSSTTIDF) has biased composition (polar residues). A compositionally biased stretch (low complexity) spans 149 to 175 (AKTRSRTAAQLPATSAASATSSRGASA). The helical transmembrane segment at 195–215 (LPIYSILLLCLTTQGLGLGDA) threads the bilayer. At 216–330 (AKPRPAKQHF…DLFTKEQLEN (115 aa)) the chain is on the cytoplasmic side. The span at 228–240 (SNSNSPNQNQNHN) shows a compositional bias: low complexity. Positions 296-315 (AGNQRGINDTHNDNSTTTKT) are enriched in polar residues. Residues 331–351 (GAVILHIIGVIYMFVALAIVC) form a helical membrane-spanning segment. The Extracellular segment spans residues 352–375 (DEFFVPSLDVIIEKLGITDDVAGA). The Alpha-1 repeat unit spans residues 372–412 (VAGATFMAAGGSAPELFTSVIGVFVSFDDVGIGTIVGSAVF). Residues 376 to 396 (TFMAAGGSAPELFTSVIGVFV) form a helical membrane-spanning segment. At 397 to 402 (SFDDVG) the chain is on the cytoplasmic side. Residues 403–423 (IGTIVGSAVFNILFVIGMCAL) form a helical membrane-spanning segment. At 424–433 (FSKTVLSLTW) the chain is on the extracellular side. The chain crosses the membrane as a helical span at residues 434-454 (WPLFRDCSFYSISLLVLIYFF). Topologically, residues 455 to 458 (RDNR) are cytoplasmic. Residues 459-479 (IFWWEALILFTIYIGYVAFMK) traverse the membrane as a helical segment. The Extracellular segment spans residues 480 to 720 (WNVQVETCVK…PDTRTPRGKR (241 aa)). Positions 508 to 565 (PAGNAANSSETSMATQPGGSVTSRAASETRSGPPGSSNAGATGNSSGGGGTSGSTQTG) are disordered. A compositionally biased stretch (polar residues) spans 512–537 (AANSSETSMATQPGGSVTSRAASETR). Residues Asn514 and Asn551 are each glycosylated (N-linked (GlcNAc...) asparagine). A compositionally biased stretch (low complexity) spans 542–551 (GSSNAGATGN). Residues 721–741 (FFPVTFIGSIVWIAAFSYLMV) traverse the membrane as a helical segment. Residues 742 to 756 (WWANVAGDTARIPPE) are Cytoplasmic-facing. Residues 757-777 (VMGLTFLAAGTSIPDLITSVI) form a helical membrane-spanning segment. Residues 764–795 (AAGTSIPDLITSVIVARKGFGDMAVSSSVGSN) form an Alpha-2 repeat. At 778–795 (VARKGFGDMAVSSSVGSN) the chain is on the extracellular side. A helical membrane pass occupies residues 796–816 (IFDVTVGLPIPWLLYGIIYGA). The Cytoplasmic portion of the chain corresponds to 817–822 (PVEVNS). Residues 823–843 (VGMVCSITILFMMLVFVVMSI) traverse the membrane as a helical segment. Topologically, residues 844-852 (ACFRWRMNK) are extracellular. A helical transmembrane segment spans residues 853-873 (GLGFTMFLLYFAFVAVSLMFE). At 874–881 (YDVITCPF) the chain is on the cytoplasmic side.

This sequence belongs to the Ca(2+):cation antiporter (CaCA) (TC 2.A.19) family. SLC24A subfamily. As to expression, expressed in the adult nervous system. Expressed in the photoreceptor cells as well as in the lamina, medulla, and optic lobes of the brain.

The protein localises to the membrane. May function in the removal and maintenance of calcium homeostasis during signaling in the adult and in signaling events during embryogenesis and patterning of imaginal disks. Transports one Ca(2+) and 1 K(+) in exchange for 4 Na(+). This Drosophila melanogaster (Fruit fly) protein is Sodium/potassium/calcium exchanger Nckx30C (Nckx30C).